Consider the following 318-residue polypeptide: Ethyl acetate hydrolase (318 aa).

Residues S165, D261, and H291 contribute to the active site.

This sequence belongs to the 'GDXG' lipolytic enzyme family. As to quaternary structure, monomer.

It is found in the cytoplasm. The catalysed reaction is ethyl acetate + H2O = ethanol + acetate + H(+). Inhibited by the serine protease inhibitor phenylmethylsulfonyl fluoride, the histidine reagent diethylpyrocarbonate and two sulfhydryl reagents, mercuric chloride and naphthol AS-D chloroacetate. Not inhibited by EDTA. Esterase that catalyzes the hydrolysis of ethyl acetate. Can also use propyl acetate and the chromogenic substrates alpha-naphthyl acetate, alpha-naphthyl propionate, alpha-naphthyl caproate and 4-nitrophenyl acetate, with a preference for short-chain aliphatic esters. Highest activity is obtained in vitro with propyl acetate, followed by ethyl acetate. In vivo, could be involved in pyoverdine biosynthesis, but its specific role and its in vivo substrate have not been identified. This Pseudomonas putida (Arthrobacter siderocapsulatus) protein is Ethyl acetate hydrolase.